Reading from the N-terminus, the 152-residue chain is Ribosomal RNA large subunit methyltransferase H (152 aa).

S-adenosyl-L-methionine contacts are provided by residues Leu-68, Gly-100, and 119 to 124 (LGVMTW).

This sequence belongs to the RNA methyltransferase RlmH family. As to quaternary structure, homodimer.

The protein resides in the cytoplasm. It catalyses the reaction pseudouridine(1915) in 23S rRNA + S-adenosyl-L-methionine = N(3)-methylpseudouridine(1915) in 23S rRNA + S-adenosyl-L-homocysteine + H(+). Its function is as follows. Specifically methylates the pseudouridine at position 1915 (m3Psi1915) in 23S rRNA. The protein is Ribosomal RNA large subunit methyltransferase H of Rhodospirillum rubrum (strain ATCC 11170 / ATH 1.1.1 / DSM 467 / LMG 4362 / NCIMB 8255 / S1).